Consider the following 554-residue polypeptide: Glucose-6-phosphate isomerase (554 aa).

Glu-359 (proton donor) is an active-site residue. Catalysis depends on residues His-390 and Lys-518.

This sequence belongs to the GPI family.

It localises to the cytoplasm. The enzyme catalyses alpha-D-glucose 6-phosphate = beta-D-fructose 6-phosphate. The protein operates within carbohydrate biosynthesis; gluconeogenesis. It participates in carbohydrate degradation; glycolysis; D-glyceraldehyde 3-phosphate and glycerone phosphate from D-glucose: step 2/4. Catalyzes the reversible isomerization of glucose-6-phosphate to fructose-6-phosphate. This is Glucose-6-phosphate isomerase from Pseudomonas fluorescens.